Reading from the N-terminus, the 235-residue chain is Peroxynitrite isomerase 2 (235 aa).

Positions 82–88 (GVWRGEG) match the GXWXGXG motif. Heme b-binding residues include Lys-198 and His-225.

It belongs to the nitrobindin family. As to quaternary structure, homodimer. The cofactor is heme b.

The enzyme catalyses peroxynitrite = nitrate. Its pathway is nitrogen metabolism. In terms of biological role, heme-binding protein able to scavenge peroxynitrite and to protect free L-tyrosine against peroxynitrite-mediated nitration, by acting as a peroxynitrite isomerase that converts peroxynitrite to nitrate. Therefore, this protein likely plays a role in peroxynitrite sensing and in the detoxification of reactive nitrogen and oxygen species (RNS and ROS, respectively). Is able to bind nitric oxide (NO) in vitro, but may act as a sensor of peroxynitrite levels in vivo. This chain is Peroxynitrite isomerase 2, found in Mycolicibacterium paratuberculosis (strain ATCC BAA-968 / K-10) (Mycobacterium paratuberculosis).